Reading from the N-terminus, the 349-residue chain is tRNA N6-adenosine threonylcarbamoyltransferase (349 aa).

The Fe cation site is built by histidine 117 and histidine 121. Substrate contacts are provided by residues 139–143 (QVSGG), aspartate 172, glycine 185, aspartate 189, and asparagine 278. Position 310 (aspartate 310) interacts with Fe cation.

The protein belongs to the KAE1 / TsaD family. Fe(2+) serves as cofactor.

The protein localises to the cytoplasm. It catalyses the reaction L-threonylcarbamoyladenylate + adenosine(37) in tRNA = N(6)-L-threonylcarbamoyladenosine(37) in tRNA + AMP + H(+). Its function is as follows. Required for the formation of a threonylcarbamoyl group on adenosine at position 37 (t(6)A37) in tRNAs that read codons beginning with adenine. Is involved in the transfer of the threonylcarbamoyl moiety of threonylcarbamoyl-AMP (TC-AMP) to the N6 group of A37, together with TsaE and TsaB. TsaD likely plays a direct catalytic role in this reaction. The polypeptide is tRNA N6-adenosine threonylcarbamoyltransferase (Lactobacillus acidophilus (strain ATCC 700396 / NCK56 / N2 / NCFM)).